A 300-amino-acid chain; its full sequence is Protein CANDIDATE G-PROTEIN COUPLED RECEPTOR 2 (300 aa).

7 consecutive transmembrane segments (helical) span residues 37 to 57, 73 to 93, 110 to 130, 152 to 172, 183 to 203, 222 to 242, and 245 to 265; these read GFLHNTVLVLASILFVAYLAY, IMIAYYGFLWLVSLLNLAWCC, LTLFTTSGMLFLEVSLVAFLF, IGLDLLLKAIYLFGFGVPLFI, WGLWVIHKLLLAGIYGMIFFM, ITVMLALNGLSLFACALTANG, and FGLWLYGITSVCYHAFYLPLL.

The protein belongs to the UPF0359 family. Interacts with GPA1. As to expression, expressed at low levels in seedlings.

It is found in the cell membrane. Its function is as follows. Plays a role in plants and microbes interactions. G-protein coupled melatonin receptor involved in root growth mediated by the bacterial quorum-sensing signals N-acyl-homoserine lactones (AHLs). Binds to melatonin. Phytomelatonin receptor required, in collaboration with GPA1, for melatonin-mediated stomatal closure involving H(2)O(2) and Ca(2+) signals. Essential for melatonin-mediated plant response to osmotic stress probably by activating reactive oxygen species (ROS) scavenging ability. This Arabidopsis thaliana (Mouse-ear cress) protein is Protein CANDIDATE G-PROTEIN COUPLED RECEPTOR 2.